A 132-amino-acid chain; its full sequence is Small ribosomal subunit protein uS8 (132 aa).

The protein belongs to the universal ribosomal protein uS8 family. As to quaternary structure, part of the 30S ribosomal subunit. Contacts proteins S5 and S12.

One of the primary rRNA binding proteins, it binds directly to 16S rRNA central domain where it helps coordinate assembly of the platform of the 30S subunit. This chain is Small ribosomal subunit protein uS8, found in Desulfitobacterium hafniense (strain DSM 10664 / DCB-2).